The primary structure comprises 449 residues: Exodeoxyribonuclease 7 large subunit (449 aa).

This sequence belongs to the XseA family. In terms of assembly, heterooligomer composed of large and small subunits.

It is found in the cytoplasm. It catalyses the reaction Exonucleolytic cleavage in either 5'- to 3'- or 3'- to 5'-direction to yield nucleoside 5'-phosphates.. Functionally, bidirectionally degrades single-stranded DNA into large acid-insoluble oligonucleotides, which are then degraded further into small acid-soluble oligonucleotides. The protein is Exodeoxyribonuclease 7 large subunit of Salmonella dublin (strain CT_02021853).